We begin with the raw amino-acid sequence, 480 residues long: UDP-glucose 6-dehydrogenase 3 (480 aa).

NAD(+) is bound by residues 8-13 (GAGYVG), Asp33, Arg38, 86-90 (VNTPT), 127-128 (ST), and Glu161. Residues 157 to 161 (EFLAE), 216 to 223 (KLAANAFL), and 256 to 269 (RIGP…VGFG) each bind substrate. The active-site Nucleophile is Cys272. Position 272–275 (272–275 (CFQK)) interacts with NAD(+). 334-335 (FK) contacts substrate. Residue Arg342 coordinates NAD(+). Ser393 is subject to Phosphoserine. Arg447 provides a ligand contact to substrate.

It belongs to the UDP-glucose/GDP-mannose dehydrogenase family.

The enzyme catalyses UDP-alpha-D-glucose + 2 NAD(+) + H2O = UDP-alpha-D-glucuronate + 2 NADH + 3 H(+). It participates in nucleotide-sugar biosynthesis; UDP-alpha-D-glucuronate biosynthesis; UDP-alpha-D-glucuronate from UDP-alpha-D-glucose: step 1/1. Functionally, involved in the biosynthesis of UDP-glucuronic acid (UDP-GlcA), providing nucleotide sugars for cell-wall polymers. This Oryza sativa subsp. japonica (Rice) protein is UDP-glucose 6-dehydrogenase 3 (UGD3).